The following is a 628-amino-acid chain: Biosynthetic arginine decarboxylase (628 aa).

K99 carries the post-translational modification N6-(pyridoxal phosphate)lysine. 279–289 (VDVGGGLGIDY) contacts substrate.

This sequence belongs to the Orn/Lys/Arg decarboxylase class-II family. SpeA subfamily. Requires Mg(2+) as cofactor. It depends on pyridoxal 5'-phosphate as a cofactor.

The catalysed reaction is L-arginine + H(+) = agmatine + CO2. Catalyzes the biosynthesis of agmatine from arginine. This is Biosynthetic arginine decarboxylase from Xanthomonas axonopodis pv. citri (strain 306).